A 214-amino-acid chain; its full sequence is uncharacterized protein (214 aa).

An N-terminal signal peptide occupies residues 1–24 (MKIWIKAICITSFVIQMSACSSSA). Residues 64–197 (ETVKGKVLHI…KEAKAGVWSI (134 aa)) form the TNase-like domain. Catalysis depends on residues R91, E99, and R142.

This is an uncharacterized protein from Bacillus anthracis.